The sequence spans 346 residues: Proto-oncogene serine/threonine-protein kinase mos (346 aa).

The 282-residue stretch at Val60–Leu341 folds into the Protein kinase domain. ATP contacts are provided by residues Leu66–Val74 and Lys87. The active-site Proton acceptor is the Asp201.

The protein belongs to the protein kinase superfamily. Ser/Thr protein kinase family.

The enzyme catalyses L-seryl-[protein] + ATP = O-phospho-L-seryl-[protein] + ADP + H(+). The catalysed reaction is L-threonyl-[protein] + ATP = O-phospho-L-threonyl-[protein] + ADP + H(+). The chain is Proto-oncogene serine/threonine-protein kinase mos from Chlorocebus aethiops (Green monkey).